A 334-amino-acid chain; its full sequence is HTH-type transcriptional repressor PurR (334 aa).

An HTH lacI-type domain is found at 2–56; it reads ATIKDVARLAGVSTTTVSHVINKTRFVAEATQEKVNKAVDELNYAPSAVARSLKC. Positions 4 to 23 form a DNA-binding region, H-T-H motif; sequence IKDVARLAGVSTTTVSHVIN. The DNA-binding element occupies 48–56; the sequence is SAVARSLKC. Phe73, Lys189, Phe220, and Asp274 together coordinate hypoxanthine.

As to quaternary structure, homodimer.

Its pathway is purine metabolism; purine nucleotide biosynthesis [regulation]. In terms of biological role, is the main repressor of the genes involved in the de novo synthesis of purine nucleotides, regulating purB, purC, purEK, purF, purHD, purL, purMN and guaBA expression. PurR is allosterically activated to bind its cognate DNA by binding the purine corepressors, hypoxanthine or guanine, thereby effecting transcription repression. This is HTH-type transcriptional repressor PurR from Vibrio atlanticus (strain LGP32) (Vibrio splendidus (strain Mel32)).